The sequence spans 433 residues: FAD-dependent monooxygenase notI' (433 aa).

E45 and R117 together coordinate FAD. Residue R195 is part of the active site. Residues D314 and A327 each contribute to the FAD site.

This sequence belongs to the paxM FAD-dependent monooxygenase family. It depends on FAD as a cofactor.

It functions in the pathway alkaloid biosynthesis. Functionally, FAD-dependent monooxygenase; part of the gene cluster that mediates the biosynthesis of notoamide, a fungal indole alkaloid that belongs to a family of natural products containing a characteristic bicyclo[2.2.2]diazaoctane core. The first step of notoamide biosynthesis involves coupling of L-proline and L-tryptophan by the bimodular NRPS notE', to produce cyclo-L-tryptophan-L-proline called brevianamide F. The reverse prenyltransferase notF' then acts as a deoxybrevianamide E synthase and converts brevianamide F to deoxybrevianamide E via reverse prenylation at C-2 of the indole ring leading to the bicyclo[2.2.2]diazaoctane core. Deoxybrevianamide E is further hydroxylated at C-6 of the indole ring, likely catalyzed by the cytochrome P450 monooxygenase notG', to yield 6-hydroxy-deoxybrevianamide E. 6-hydroxy-deoxybrevianamide E is a specific substrate of the prenyltransferase notC' for normal prenylation at C-7 to produce 6-hydroxy-7-prenyl-deoxybrevianamide, also called notoamide S. As the proposed pivotal branching point in notoamide biosynthesis, notoamide S can be diverted to notoamide E through an oxidative pyran ring closure putatively catalyzed by either notH' cytochrome P450 monooxygenase or the notD' FAD-linked oxidoreductase. This step would be followed by an indole 2,3-epoxidation-initiated pinacol-like rearrangement catalyzed by the notB' FAD-dependent monooxygenase leading to the formation of notoamide C and notoamide D. On the other hand notoamide S is converted to notoamide T by notH' (or notD'), a bifunctional oxidase that also functions as the intramolecular Diels-Alderase responsible for generation of (-)-notoamide T. To generate antipodal (+)-notoaminide T, notH (or notD) in Aspergillus strain MF297-2 is expected to catalyze a Diels-Alder reaction leading to the opposite stereochemistry. The remaining oxidoreductase notD' (or notH') likely catalyzes the oxidative pyran ring formation to yield (-)-stephacidin A. The FAD-dependent monooxygenase notI' is highly similar to notB' and is predicted to catalyze a similar conversion from (-)-stephacidin A to (+)-notoamide B via the 2,3-epoxidation of (-)-stephacidin A followed by a pinacol-type rearrangement. Finally, it remains unclear which enzyme could be responsible for the final hydroxylation steps leading to notoamide A and sclerotiamide. The chain is FAD-dependent monooxygenase notI' from Aspergillus versicolor.